We begin with the raw amino-acid sequence, 657 residues long: Protein PSK SIMULATOR 1 (657 aa).

4 stretches are compositionally biased toward polar residues: residues Met-1–Pro-15, His-26–Gly-39, Glu-62–Gln-76, and Arg-540–Pro-556. Disordered stretches follow at residues Met-1 to Asp-80 and Pro-534 to Gly-559. The N-myristoyl glycine moiety is linked to residue Gly-2.

It is found in the nucleus. In terms of biological role, promotes seedling growth probably via the regulation of phytosulfokine (PSK) signaling; PSK are peptide phytohormones acting as growth factors. Together with PSI2 and PSI3, required during vegetative growth and reproduction. May also have a function in carbohydrate metabolism. This Arabidopsis thaliana (Mouse-ear cress) protein is Protein PSK SIMULATOR 1.